Consider the following 139-residue polypeptide: Protein cornichon homolog 4 (139 aa).

3 helical membrane passes run 5–25, 57–77, and 118–138; these read VFLFSLLDCCALIFLSVYFII, IVTVLMLVSLHWFIFLLNLPV, and LGFYLLCFFMYLYSMILALIN.

Belongs to the cornichon family. Interacts with Sec23/24 complex components SEC24B and SEC24D. Interacts with CCR5. Interacts with ADRB2 in the early secretory pathway.

It is found in the membrane. The protein resides in the endoplasmic reticulum. Its subcellular location is the endoplasmic reticulum-Golgi intermediate compartment. Involved in G protein-coupled receptors (GPCRs) trafficking from the endoplasmic reticulum to the cell surface; it promotes the exit of GPCRs from the early secretory pathway, likely through interaction with the COPII machinery. The chain is Protein cornichon homolog 4 (Cnih4) from Mus musculus (Mouse).